We begin with the raw amino-acid sequence, 692 residues long: Elongation factor G (692 aa).

One can recognise a tr-type G domain in the interval 8–283 (NRIRNIGIAA…AVIDYLPAPT (276 aa)). GTP contacts are provided by residues 17 to 24 (AHIDAGKT), 81 to 85 (DTPGH), and 135 to 138 (NKMD).

This sequence belongs to the TRAFAC class translation factor GTPase superfamily. Classic translation factor GTPase family. EF-G/EF-2 subfamily.

It localises to the cytoplasm. Catalyzes the GTP-dependent ribosomal translocation step during translation elongation. During this step, the ribosome changes from the pre-translocational (PRE) to the post-translocational (POST) state as the newly formed A-site-bound peptidyl-tRNA and P-site-bound deacylated tRNA move to the P and E sites, respectively. Catalyzes the coordinated movement of the two tRNA molecules, the mRNA and conformational changes in the ribosome. This is Elongation factor G from Helicobacter pylori (strain G27).